We begin with the raw amino-acid sequence, 408 residues long: MRTSPRMKWFVLLFTFVFAIGMNSFRNSFQFFMLPMADAFHADRSLISVSVSIFMITTGIVQFFVGFFIDRFSVRKIMALGAVCISASFLVLPYSPNVHVFSAIYGVLGGIGYSCAVGVTTQYFISCWFDTHKGLALAILTNANSAGLLLLSPIWAAAPYHAGWQSTYTILGIVMAAVLLPLLVFGMKHPPHAQAETVKKSYDWRGFWNVMKQSRLIHILYFGVFTCGFTMGIIDAHLVPILKDAHVSHVNGMMAAFGAFIIIGGLLAGWLSDLLGSRSVMLSILFFIRLLSLICLLIPILGIHHSDLWYFGFILLFGLSYTGVIPLTAASISESYQTGLIGSLLGINFFIHQVAGALSVYAGGLFFDMTHGYLLIVAVCIVFVGLSAVIELVPFLDKQKAKETHHSI.

Transmembrane regions (helical) follow at residues 9 to 29 (WFVL…RNSF), 49 to 69 (VSVS…GFFI), 77 to 97 (IMAL…YSPN), 100 to 120 (VFSA…VGVT), 135 to 155 (LALA…SPIW), 167 to 187 (TYTI…VFGM), 216 to 236 (LIHI…IIDA), 252 to 272 (GMMA…GWLS), 283 to 303 (SILF…ILGI), 308 to 328 (LWYF…IPLT), 340 to 360 (LIGS…ALSV), and 373 to 393 (YLLI…IELV).

This sequence belongs to the major facilitator superfamily.

The protein resides in the cell membrane. This is an uncharacterized protein from Bacillus subtilis (strain 168).